Here is a 104-residue protein sequence, read N- to C-terminus: Probable monothiol glutaredoxin 2 (104 aa).

Residues 7–104 (FEFIENEIKN…NGELEKMLKG (98 aa)) form the Glutaredoxin domain. A glutathione-binding site is contributed by Lys-24. Cys-32 provides a ligand contact to [2Fe-2S] cluster. Residues Arg-61, Phe-73, and 86–87 (CD) each bind glutathione.

It belongs to the glutaredoxin family. Monothiol subfamily.

This is Probable monothiol glutaredoxin 2 (grxC2) from Rickettsia felis (strain ATCC VR-1525 / URRWXCal2) (Rickettsia azadi).